The sequence spans 223 residues: Rho-related protein racE (223 aa).

A GTP-binding site is contributed by 18-25 (GDGAVGKT). An Effector region motif is present at residues 40–48 (YVPTVFENY). GTP contacts are provided by residues 65–69 (DTAGQ) and 123–126 (TKID). The tract at residues 187 to 223 (GMDKKSQDGSSSASGVPSGDKPTKGKAGKKKSGCIIL) is disordered. The segment covering 210 to 223 (KGKAGKKKSGCIIL) has biased composition (basic residues). C220 bears the Cysteine methyl ester mark. The S-geranylgeranyl cysteine moiety is linked to residue C220. Positions 221-223 (IIL) are cleaved as a propeptide — removed in mature form.

This sequence belongs to the small GTPase superfamily. Rho family. As to quaternary structure, interacts with rgaA.

The protein resides in the cell membrane. Specifically required for cytokinesis. This Dictyostelium discoideum (Social amoeba) protein is Rho-related protein racE (racE).